The primary structure comprises 417 residues: D-galactonate dehydratase family member RspA (417 aa).

Q43 and H127 together coordinate substrate. Y158 functions as the Proton donor/acceptor in the catalytic mechanism. D223 is a binding site for Mg(2+). The active-site Proton donor/acceptor is the H225. E249 and E275 together coordinate Mg(2+). Substrate is bound by residues E275, R296, H325, D329, and E352.

Belongs to the mandelate racemase/muconate lactonizing enzyme family. GalD subfamily. The cofactor is Mg(2+).

The enzyme catalyses D-gluconate = 2-dehydro-3-deoxy-D-gluconate + H2O. Has low D-gluconate dehydratase activity (in vitro), suggesting that it has no significant role in D-gluconate degradation in vivo. Has no detectable activity with a panel of 70 other acid sugars (in vitro). This Pantoea ananatis (strain LMG 20103) protein is D-galactonate dehydratase family member RspA (rspA).